A 491-amino-acid polypeptide reads, in one-letter code: Glutamyl-tRNA(Gln) amidotransferase subunit A (491 aa).

Active-site charge relay system residues include Lys-81 and Ser-156. Ser-180 acts as the Acyl-ester intermediate in catalysis.

The protein belongs to the amidase family. GatA subfamily. As to quaternary structure, heterotrimer of A, B and C subunits.

The enzyme catalyses L-glutamyl-tRNA(Gln) + L-glutamine + ATP + H2O = L-glutaminyl-tRNA(Gln) + L-glutamate + ADP + phosphate + H(+). Functionally, allows the formation of correctly charged Gln-tRNA(Gln) through the transamidation of misacylated Glu-tRNA(Gln) in organisms which lack glutaminyl-tRNA synthetase. The reaction takes place in the presence of glutamine and ATP through an activated gamma-phospho-Glu-tRNA(Gln). The chain is Glutamyl-tRNA(Gln) amidotransferase subunit A from Alcanivorax borkumensis (strain ATCC 700651 / DSM 11573 / NCIMB 13689 / SK2).